Reading from the N-terminus, the 251-residue chain is tRNA (guanine-N(1)-)-methyltransferase (251 aa).

Residues glycine 122 and 142 to 147 each bind S-adenosyl-L-methionine; that span reads IGDYVL. Residues 226–251 are disordered; sequence RARRPDLFATRPQPNRQKPPKNTTDG. Polar residues predominate over residues 237–251; it reads PQPNRQKPPKNTTDG.

Belongs to the RNA methyltransferase TrmD family. In terms of assembly, homodimer.

It is found in the cytoplasm. The catalysed reaction is guanosine(37) in tRNA + S-adenosyl-L-methionine = N(1)-methylguanosine(37) in tRNA + S-adenosyl-L-homocysteine + H(+). Its function is as follows. Specifically methylates guanosine-37 in various tRNAs. In Rhodopseudomonas palustris (strain BisB18), this protein is tRNA (guanine-N(1)-)-methyltransferase.